Consider the following 513-residue polypeptide: MNKRAIISVYDKNGIVEFAKKLKEFGYDIISTGGTMKYLTENGIEVINISDVTRFPEILDGRVKTLHPNIHAGILAMKDNREHLETLKALDILPIDMVVVNLYPFKETIFKEDVTLDNVIENIDIGGPTMIRAAAKNFKYTTVIVDPEDYDIVAMEIEKNGEVSYETRFYLATKVFEYTSYYDSMIFNYFKHVRKDQSFSKHFTVPLELLQYLRYGENPHQKACFYKISLPFIETSNIVNCTQLHGKELSYNNILDSDSAIELLKEFDEPTCVAIKHNNPCAVASAENINEAYKKVYESDPISIFGGIVAFNRKVDKNVAEQLKKIFLEIVIAPEFDEDALSILCSKKDLRVLKLASLEKTDTFYDIKSVNGGALVQEKDRMLLADQLQVVTERKPSEKELEDLIFAWKVVKHVKSNAIVVAKDKMTLGIGTGQTNRIWAVEHAISRSRFDLKGAVLASDAFFPFSDSVEAAGKAGISAIIQPGGSIRDKDSIEMANRFNIAMVFTGMRHFRH.

Positions 1-145 constitute an MGS-like domain; the sequence is MNKRAIISVY…KNFKYTTVIV (145 aa).

The protein belongs to the PurH family.

The enzyme catalyses (6R)-10-formyltetrahydrofolate + 5-amino-1-(5-phospho-beta-D-ribosyl)imidazole-4-carboxamide = 5-formamido-1-(5-phospho-D-ribosyl)imidazole-4-carboxamide + (6S)-5,6,7,8-tetrahydrofolate. The catalysed reaction is IMP + H2O = 5-formamido-1-(5-phospho-D-ribosyl)imidazole-4-carboxamide. It functions in the pathway purine metabolism; IMP biosynthesis via de novo pathway; 5-formamido-1-(5-phospho-D-ribosyl)imidazole-4-carboxamide from 5-amino-1-(5-phospho-D-ribosyl)imidazole-4-carboxamide (10-formyl THF route): step 1/1. The protein operates within purine metabolism; IMP biosynthesis via de novo pathway; IMP from 5-formamido-1-(5-phospho-D-ribosyl)imidazole-4-carboxamide: step 1/1. In Caldicellulosiruptor bescii (strain ATCC BAA-1888 / DSM 6725 / KCTC 15123 / Z-1320) (Anaerocellum thermophilum), this protein is Bifunctional purine biosynthesis protein PurH.